The primary structure comprises 1201 residues: Putative disease resistance protein At4g19050 (1201 aa).

ATP is bound at residue 33–40; sequence GEAGIGKT. LRR repeat units lie at residues 469-491, 492-514, 517-539, 540-562, 680-701, 703-725, 726-748, 750-771, 773-795, 796-818, 820-841, 843-865, 866-888, and 890-911; these read KLRV…SGLQ, GLHV…FFKN, QLQS…EKLS, MLRC…IVET, ELRI…IADV, NLNK…EKLT, HLEV…FGEM, YLHE…ISEL, NLKE…EKLT, NLEI…FENL, CLHK…ISEL, HLVI…FESM, and YLCE…PKQS. The span at 1162-1180 shows a compositional bias: basic and acidic residues; the sequence is DEPRIGARITDEISEDQPH. The disordered stretch occupies residues 1162–1201; sequence DEPRIGARITDEISEDQPHKNTIGPETQTPTQPTKATDTV. Positions 1185-1201 are enriched in polar residues; it reads GPETQTPTQPTKATDTV.

This sequence belongs to the disease resistance NB-LRR family.

In terms of biological role, potential disease resistance protein. This Arabidopsis thaliana (Mouse-ear cress) protein is Putative disease resistance protein At4g19050.